Consider the following 311-residue polypeptide: Biotin synthase (311 aa).

The Radical SAM core domain occupies 32–258; it reads NGVQFCQLLN…LFPLSRIRLA (227 aa). 3 residues coordinate [4Fe-4S] cluster: cysteine 47, cysteine 51, and cysteine 54. Cysteine 91, cysteine 124, cysteine 184, and arginine 256 together coordinate [2Fe-2S] cluster.

Belongs to the radical SAM superfamily. Biotin synthase family. As to quaternary structure, homodimer. Requires [4Fe-4S] cluster as cofactor. The cofactor is [2Fe-2S] cluster.

The enzyme catalyses (4R,5S)-dethiobiotin + (sulfur carrier)-SH + 2 reduced [2Fe-2S]-[ferredoxin] + 2 S-adenosyl-L-methionine = (sulfur carrier)-H + biotin + 2 5'-deoxyadenosine + 2 L-methionine + 2 oxidized [2Fe-2S]-[ferredoxin]. Its pathway is cofactor biosynthesis; biotin biosynthesis; biotin from 7,8-diaminononanoate: step 2/2. Catalyzes the conversion of dethiobiotin (DTB) to biotin by the insertion of a sulfur atom into dethiobiotin via a radical-based mechanism. This Methylacidiphilum infernorum (isolate V4) (Methylokorus infernorum (strain V4)) protein is Biotin synthase.